Reading from the N-terminus, the 236-residue chain is Rho-related GTP-binding protein RhoV (236 aa).

Positions 1 to 27 are disordered; the sequence is MPPRELSEAESSPLRSPTPPPGRGSAS. Ser-25 carries the phosphoserine modification. GTP-binding positions include 38–45, 85–89, and 143–146; these read GDGAVGKS, DTAGQ, and TQAD. The S-palmitoyl cysteine moiety is linked to residue Cys-234.

It belongs to the small GTPase superfamily. Rho family. As to quaternary structure, interacts with PAK2. The cofactor is Mg(2+).

The protein localises to the cell membrane. It is found in the endosome membrane. Its function is as follows. Plays a role in the control of the actin cytoskeleton via activation of the JNK pathway. This chain is Rho-related GTP-binding protein RhoV, found in Bos taurus (Bovine).